A 409-amino-acid chain; its full sequence is TM2 domain-containing protein ZK858.5 (409 aa).

The TM2 domain maps to 8-55 (VKPWIVRIILIVGGLFGAHRLYLKQVPEAFVFFSTLGVLLIGWLYDSF). A run of 6 helical transmembrane segments spans residues 10 to 30 (PWIV…RLYL), 37 to 57 (FVFF…SFMF), 104 to 124 (VLYG…TFGW), 127 to 147 (INLI…IYII), 168 to 190 (MFIM…AIVS), and 209 to 229 (HFLF…LGCS).

It belongs to the TM2 family.

The protein resides in the membrane. This Caenorhabditis elegans protein is TM2 domain-containing protein ZK858.5.